Reading from the N-terminus, the 273-residue chain is Undecaprenyl-diphosphatase (273 aa).

Transmembrane regions (helical) follow at residues 3–23 (IIEL…EFAP), 48–68 (GANT…VVVF), 89–109 (LTLM…VLFE), 116–136 (LFST…MIAA), 151–171 (ITYK…WPGF), 192–212 (ADFT…ISLL), 225–245 (FFVV…RFFL), and 253–273 (LVPF…VYFA).

This sequence belongs to the UppP family.

It is found in the cell membrane. It carries out the reaction di-trans,octa-cis-undecaprenyl diphosphate + H2O = di-trans,octa-cis-undecaprenyl phosphate + phosphate + H(+). In terms of biological role, catalyzes the dephosphorylation of undecaprenyl diphosphate (UPP). Confers resistance to bacitracin. This is Undecaprenyl-diphosphatase from Anoxybacillus flavithermus (strain DSM 21510 / WK1).